The chain runs to 734 residues: Photosystem I P700 chlorophyll a apoprotein A2 (734 aa).

8 consecutive transmembrane segments (helical) span residues 46-69, 135-158, 175-199, 273-291, 330-353, 369-395, 417-439, and 517-535; these read IFASHFGQLAIIFLWTSGNLFHVA, LYNGALFLVILSSISLIAGWLHLQ, LNHHLSGLFGVSSLAWTGHLVHVAI, IAHHHLAIAVVFIIAGHMY, LHFQLGLALASLGVITSLVAQHMY, AALYTHHQYIAGFIMTGAFAHGAIFFI, AIISHLSWASLFLGFHTLGLYVH, and FLVHHAIALGLHTTTLILV. 2 residues coordinate [4Fe-4S] cluster: cysteine 559 and cysteine 568. Helical transmembrane passes span 575–596 and 643–665; these read AFYLAVFWMLNTIGWVTFYWHW and LSVWAWMFLFGHLVWATGFMFLI. Chlorophyll a contacts are provided by histidine 654, methionine 662, and tyrosine 670. Tryptophan 671 contributes to the phylloquinone binding site. A helical transmembrane segment spans residues 707–727; sequence LVGLAHFSVGYIFTYAAFLIA.

It belongs to the PsaA/PsaB family. As to quaternary structure, the PsaA/B heterodimer binds the P700 chlorophyll special pair and subsequent electron acceptors. PSI consists of a core antenna complex that captures photons, and an electron transfer chain that converts photonic excitation into a charge separation. The eukaryotic PSI reaction center is composed of at least 11 subunits. Requires P700 is a chlorophyll a/chlorophyll a' dimer, A0 is one or more chlorophyll a, A1 is one or both phylloquinones and FX is a shared 4Fe-4S iron-sulfur center. as cofactor.

The protein localises to the plastid. It localises to the chloroplast thylakoid membrane. The enzyme catalyses reduced [plastocyanin] + hnu + oxidized [2Fe-2S]-[ferredoxin] = oxidized [plastocyanin] + reduced [2Fe-2S]-[ferredoxin]. Its function is as follows. PsaA and PsaB bind P700, the primary electron donor of photosystem I (PSI), as well as the electron acceptors A0, A1 and FX. PSI is a plastocyanin-ferredoxin oxidoreductase, converting photonic excitation into a charge separation, which transfers an electron from the donor P700 chlorophyll pair to the spectroscopically characterized acceptors A0, A1, FX, FA and FB in turn. Oxidized P700 is reduced on the lumenal side of the thylakoid membrane by plastocyanin. The protein is Photosystem I P700 chlorophyll a apoprotein A2 of Marchantia polymorpha (Common liverwort).